Consider the following 126-residue polypeptide: Holo-[acyl-carrier-protein] synthase (126 aa).

Mg(2+) is bound by residues Asp8 and Glu57.

It belongs to the P-Pant transferase superfamily. AcpS family. Mg(2+) serves as cofactor.

The protein localises to the cytoplasm. The catalysed reaction is apo-[ACP] + CoA = holo-[ACP] + adenosine 3',5'-bisphosphate + H(+). Transfers the 4'-phosphopantetheine moiety from coenzyme A to a Ser of acyl-carrier-protein. In Halorhodospira halophila (strain DSM 244 / SL1) (Ectothiorhodospira halophila (strain DSM 244 / SL1)), this protein is Holo-[acyl-carrier-protein] synthase.